The primary structure comprises 86 residues: Trypsin inhibitor (86 aa).

Intrachain disulfides connect Cys-8–Cys-65 and Cys-49–Cys-58.

Serine protease inhibitor which is active against trypsin. Displays strong antifungal activity against a number of phytopathogenic fungi including M.melonis, A.cucumerina, A.solani, C.glaeosporioides and P.capsici. The polypeptide is Trypsin inhibitor (Fagopyrum tataricum (Tartarian buckwheat)).